Consider the following 192-residue polypeptide: Imidazoleglycerol-phosphate dehydratase (192 aa).

Belongs to the imidazoleglycerol-phosphate dehydratase family.

The protein localises to the cytoplasm. It catalyses the reaction D-erythro-1-(imidazol-4-yl)glycerol 3-phosphate = 3-(imidazol-4-yl)-2-oxopropyl phosphate + H2O. Its pathway is amino-acid biosynthesis; L-histidine biosynthesis; L-histidine from 5-phospho-alpha-D-ribose 1-diphosphate: step 6/9. The protein is Imidazoleglycerol-phosphate dehydratase of Staphylococcus aureus (strain bovine RF122 / ET3-1).